Here is a 146-residue protein sequence, read N- to C-terminus: Ribosome-binding factor A (146 aa).

Positions 121–146 are disordered; the sequence is KQQQFGSADDVTENDIDEADDTEGKA. Over residues 130 to 146 the composition is skewed to acidic residues; sequence DVTENDIDEADDTEGKA.

Belongs to the RbfA family. Monomer. Binds 30S ribosomal subunits, but not 50S ribosomal subunits or 70S ribosomes.

The protein resides in the cytoplasm. Functionally, one of several proteins that assist in the late maturation steps of the functional core of the 30S ribosomal subunit. Associates with free 30S ribosomal subunits (but not with 30S subunits that are part of 70S ribosomes or polysomes). Required for efficient processing of 16S rRNA. May interact with the 5'-terminal helix region of 16S rRNA. This is Ribosome-binding factor A from Shewanella sp. (strain MR-4).